The sequence spans 1449 residues: VWFA and cache domain-containing protein CG16868 (1449 aa).

The N-terminal stretch at 1-23 is a signal peptide; it reads MWPNSNLNAVLLILAVLACPTSS. Over 24 to 1220 the chain is Extracellular; it reads QHVPLAMANS…NPQREQHAYS (1197 aa). Asn32, Asn112, Asn153, Asn407, Asn447, and Asn497 each carry an N-linked (GlcNAc...) asparagine glycan. The 222-residue stretch at 320–541 folds into the VWFA domain; sequence FVLFLIDVGS…TSLPQTSSRI (222 aa). In terms of domain architecture, Cache 1 spans 557–639; it reads VHPPVVDADS…PRPLIQRETS (83 aa). N-linked (GlcNAc...) asparagine glycosylation is found at Asn649, Asn668, and Asn707. One can recognise a Cache 2 domain in the interval 889–934; sequence TAPYLDAGGAGYIITIAHTIFEGKAHALHSAQQDRPVAVVALDVPY. N-linked (GlcNAc...) asparagine glycosylation is found at Asn1015, Asn1025, Asn1059, and Asn1111. Residues 1221 to 1241 traverse the membrane as a helical segment; the sequence is AFGPLGGAIVVLVMVIGFAIY. Residues 1242–1449 lie on the Cytoplasmic side of the membrane; the sequence is CYRHNLDAQT…VHRHMETAES (208 aa). Disordered regions lie at residues 1307–1339 and 1352–1416; these read YHVS…SSDQ and DKRH…GGSV. The span at 1359-1369 shows a compositional bias: low complexity; it reads DTMSISTSISS. Positions 1370–1392 are enriched in polar residues; it reads PTNRQQSSSQPNTHPYLSNQPTS.

Belongs to the calcium channel subunit alpha-2/delta family.

The protein resides in the membrane. In Drosophila melanogaster (Fruit fly), this protein is VWFA and cache domain-containing protein CG16868.